A 76-amino-acid chain; its full sequence is Large ribosomal subunit protein bL31 (76 aa).

Zn(2+) contacts are provided by Cys16, Cys18, Cys37, and Cys40.

It belongs to the bacterial ribosomal protein bL31 family. Type A subfamily. In terms of assembly, part of the 50S ribosomal subunit. It depends on Zn(2+) as a cofactor.

Functionally, binds the 23S rRNA. In Maridesulfovibrio salexigens (strain ATCC 14822 / DSM 2638 / NCIMB 8403 / VKM B-1763) (Desulfovibrio salexigens), this protein is Large ribosomal subunit protein bL31.